Reading from the N-terminus, the 352-residue chain is Ribosome biogenesis protein BRX1 homolog (352 aa).

Residues methionine 1–arginine 55 form a disordered region. Over residues lysine 9–tryptophan 22 the composition is skewed to basic and acidic residues. A compositionally biased stretch (acidic residues) spans serine 32–aspartate 42. The segment covering aspartate 43–arginine 55 has biased composition (basic and acidic residues). Residues glutamate 63–glutamate 253 form the Brix domain.

The protein belongs to the BRX1 family.

Its subcellular location is the nucleus. The protein resides in the nucleolus. Functionally, required for biogenesis of the 60S ribosomal subunit. This chain is Ribosome biogenesis protein BRX1 homolog, found in Caenorhabditis elegans.